We begin with the raw amino-acid sequence, 332 residues long: Biotin synthase (332 aa).

Residues 53–282 (HFGKKVKLNM…TKEIRISGGR (230 aa)) enclose the Radical SAM core domain. Cys-71, Cys-75, and Cys-78 together coordinate [4Fe-4S] cluster. Cys-115, Cys-147, Cys-207, and Arg-277 together coordinate [2Fe-2S] cluster.

The protein belongs to the radical SAM superfamily. Biotin synthase family. Homodimer. Requires [4Fe-4S] cluster as cofactor. [2Fe-2S] cluster is required as a cofactor.

It carries out the reaction (4R,5S)-dethiobiotin + (sulfur carrier)-SH + 2 reduced [2Fe-2S]-[ferredoxin] + 2 S-adenosyl-L-methionine = (sulfur carrier)-H + biotin + 2 5'-deoxyadenosine + 2 L-methionine + 2 oxidized [2Fe-2S]-[ferredoxin]. The protein operates within cofactor biosynthesis; biotin biosynthesis; biotin from 7,8-diaminononanoate: step 2/2. Functionally, catalyzes the conversion of dethiobiotin (DTB) to biotin by the insertion of a sulfur atom into dethiobiotin via a radical-based mechanism. The chain is Biotin synthase from Bacillus cereus (strain ATCC 14579 / DSM 31 / CCUG 7414 / JCM 2152 / NBRC 15305 / NCIMB 9373 / NCTC 2599 / NRRL B-3711).